The following is a 340-amino-acid chain: Phosphoribosylformylglycinamidine cyclo-ligase (340 aa).

Belongs to the AIR synthase family.

It localises to the cytoplasm. The enzyme catalyses 2-formamido-N(1)-(5-O-phospho-beta-D-ribosyl)acetamidine + ATP = 5-amino-1-(5-phospho-beta-D-ribosyl)imidazole + ADP + phosphate + H(+). It participates in purine metabolism; IMP biosynthesis via de novo pathway; 5-amino-1-(5-phospho-D-ribosyl)imidazole from N(2)-formyl-N(1)-(5-phospho-D-ribosyl)glycinamide: step 2/2. This chain is Phosphoribosylformylglycinamidine cyclo-ligase, found in Streptococcus pyogenes serotype M18 (strain MGAS8232).